The following is a 406-amino-acid chain: Argininosuccinate synthase (406 aa).

ATP contacts are provided by residues 12–20 (AYSGGLDTS) and A39. Y90 and S95 together coordinate L-citrulline. Residue G120 participates in ATP binding. L-aspartate is bound by residues T122, N126, and D127. Position 126 (N126) interacts with L-citrulline. L-citrulline-binding residues include R130, S179, S188, E264, and Y276.

Belongs to the argininosuccinate synthase family. Type 1 subfamily. Homotetramer.

Its subcellular location is the cytoplasm. It catalyses the reaction L-citrulline + L-aspartate + ATP = 2-(N(omega)-L-arginino)succinate + AMP + diphosphate + H(+). It participates in amino-acid biosynthesis; L-arginine biosynthesis; L-arginine from L-ornithine and carbamoyl phosphate: step 2/3. The sequence is that of Argininosuccinate synthase from Citrifermentans bemidjiense (strain ATCC BAA-1014 / DSM 16622 / JCM 12645 / Bem) (Geobacter bemidjiensis).